The following is a 1465-amino-acid chain: Gag-Pol polyprotein (1465 aa).

Glycine 2 carries the N-myristoyl glycine; by host lipid modification. The interval 7–31 (VLSGKKTDELEKVRLRPGGKKKYML) is interaction with Gp41. The Nuclear export signal signature appears at 16–22 (LEKVRLR). The Nuclear localization signal motif lies at 26 to 32 (KKKYMLK). A compositionally biased stretch (basic and acidic residues) spans 105–114 (QRHLAADTEK). The segment at 105-129 (QRHLAADTEKMPATNKPTAPPSGGN) is disordered. Tyrosine 130 is modified (phosphotyrosine; by host). The tract at residues 186–223 (NCVGEHQAAMQIIREIINEEAADWDQQHPSPGPMPAGQ) is interaction with human PPIA/CYPA and NUP153. A dimerization/Multimerization of capsid protein p24 region spans residues 274–360 (YNPTNILDIK…GGPGQKARLM (87 aa)). 2 CCHC-type zinc fingers span residues 388 to 405 (VTCW…QCRA) and 409 to 426 (QGCW…KCPE). The disordered stretch occupies residues 441–508 (ASQLPHDPSA…PRETLQGGDR (68 aa)). A compositionally biased stretch (basic and acidic residues) spans 484–501 (DAEKLHADGETTEREPRE). Residues 513–517 (PQFSL) are dimerization of protease. The Peptidase A2 domain occupies 532–601 (VEVLLDTGVD…TPINIFGRNI (70 aa)). The active-site For protease activity; shared with dimeric partner is aspartate 537. 2 dimerization of protease regions span residues 561-567 (GIGGFIN) and 600-612 (NILN…LNFP). Residues 655–844 (EGQLEEAPPT…PPFKWMGYEL (190 aa)) form the Reverse transcriptase domain. Residues aspartate 720, aspartate 795, and aspartate 796 each contribute to the Mg(2+) site. The interval 837–845 (FKWMGYELW) is RT 'primer grip'. Residues 1007–1023 (WDQWWTDYWQVTWIPEW) carry the Tryptophan repeat motif motif. The 124-residue stretch at 1043-1166 (LEGRETYYTD…VDHLVSQGIR (124 aa)) folds into the RNase H type-1 domain. Mg(2+) is bound by residues aspartate 1052, glutamate 1087, aspartate 1107, and aspartate 1158. The Integrase-type zinc finger occupies 1172-1213 (EKIEPAQEEHEKYHGNVKELVHKFGIPQLVAKQIVNSCDKCQ). Zn(2+) contacts are provided by histidine 1181, histidine 1185, cysteine 1209, and cysteine 1212. In terms of domain architecture, Integrase catalytic spans 1222–1373 (QVNADLGTWQ…TPAERLVNMI (152 aa)). Residues aspartate 1233, aspartate 1285, and glutamate 1321 each contribute to the Mg(2+) site. The integrase-type DNA-binding region spans 1392 to 1439 (FQVYYREGRDQLWKGPGELLWKGEGAVIIKVGTEIKVVPRRKAKIIRH).

Homotrimer; further assembles as hexamers of trimers. Interacts with gp41 (via C-terminus). Interacts with host CALM1; this interaction induces a conformational change in the Matrix protein, triggering exposure of the myristate group. Interacts with host AP3D1; this interaction allows the polyprotein trafficking to multivesicular bodies during virus assembly. Part of the pre-integration complex (PIC) which is composed of viral genome, matrix protein, Vpr and integrase. In terms of assembly, homodimer; the homodimer further multimerizes as homohexamers or homopentamers. Interacts with human PPIA/CYPA. Interacts with human NUP153. Interacts with host PDZD8; this interaction stabilizes the capsid. Interacts with monkey TRIM5; this interaction destabilizes the capsid. As to quaternary structure, homodimer, whose active site consists of two apposed aspartic acid residues. Heterodimer of p66 RT and p51 RT (RT p66/p51). Heterodimerization of RT is essential for DNA polymerase activity. The overall folding of the subdomains is similar in p66 RT and p51 RT but the spatial arrangements of the subdomains are dramatically different. In terms of assembly, homotetramer; may further associate as a homohexadecamer. Part of the pre-integration complex (PIC) which is composed of viral genome, matrix protein, Vpr and integrase. Interacts with human SMARCB1/INI1 and human PSIP1/LEDGF isoform 1. Interacts with human KPNA3; this interaction might play a role in nuclear import of the pre-integration complex. Interacts with human NUP153; this interaction might play a role in nuclear import of the pre-integration complex. Requires Mg(2+) as cofactor. In terms of processing, specific enzymatic cleavages by the viral protease yield mature proteins. The protease is released by autocatalytic cleavage. The polyprotein is cleaved during and after budding, this process is termed maturation. Proteolytic cleavage of p66 RT removes the RNase H domain to yield the p51 RT subunit. Nucleocapsid protein p7 might be further cleaved after virus entry.

It localises to the host cell membrane. The protein resides in the host endosome. The protein localises to the host multivesicular body. It is found in the virion membrane. Its subcellular location is the host nucleus. It localises to the host cytoplasm. The protein resides in the virion. It catalyses the reaction Endopeptidase for which the P1 residue is preferably hydrophobic.. The catalysed reaction is Endohydrolysis of RNA in RNA/DNA hybrids. Three different cleavage modes: 1. sequence-specific internal cleavage of RNA. Human immunodeficiency virus type 1 and Moloney murine leukemia virus enzymes prefer to cleave the RNA strand one nucleotide away from the RNA-DNA junction. 2. RNA 5'-end directed cleavage 13-19 nucleotides from the RNA end. 3. DNA 3'-end directed cleavage 15-20 nucleotides away from the primer terminus.. It carries out the reaction 3'-end directed exonucleolytic cleavage of viral RNA-DNA hybrid.. The enzyme catalyses DNA(n) + a 2'-deoxyribonucleoside 5'-triphosphate = DNA(n+1) + diphosphate. Protease: The viral protease is inhibited by many synthetic protease inhibitors (PIs), such as amprenavir, atazanavir, indinavir, loprinavir, nelfinavir, ritonavir and saquinavir. Use of protease inhibitors in tritherapy regimens permit more ambitious therapeutic strategies. Reverse transcriptase/ribonuclease H: RT can be inhibited either by nucleoside RT inhibitors (NRTIs) or by non nucleoside RT inhibitors (NNRTIs). NRTIs act as chain terminators, whereas NNRTIs inhibit DNA polymerization by binding a small hydrophobic pocket near the RT active site and inducing an allosteric change in this region. Classical NRTIs are abacavir, adefovir (PMEA), didanosine (ddI), lamivudine (3TC), stavudine (d4T), tenofovir (PMPA), zalcitabine (ddC), and zidovudine (AZT). Classical NNRTIs are atevirdine (BHAP U-87201E), delavirdine, efavirenz (DMP-266), emivirine (I-EBU), and nevirapine (BI-RG-587). The tritherapies used as a basic effective treatment of AIDS associate two NRTIs and one NNRTI. Mediates, with Gag polyprotein, the essential events in virion assembly, including binding the plasma membrane, making the protein-protein interactions necessary to create spherical particles, recruiting the viral Env proteins, and packaging the genomic RNA via direct interactions with the RNA packaging sequence (Psi). Gag-Pol polyprotein may regulate its own translation, by the binding genomic RNA in the 5'-UTR. At low concentration, the polyprotein would promote translation, whereas at high concentration, the polyprotein would encapsidate genomic RNA and then shut off translation. In terms of biological role, targets the polyprotein to the plasma membrane via a multipartite membrane-binding signal, that includes its myristoylated N-terminus. Matrix protein is part of the pre-integration complex. Implicated in the release from host cell mediated by Vpu. Binds to RNA. Its function is as follows. Forms the conical core that encapsulates the genomic RNA-nucleocapsid complex in the virion. Most core are conical, with only 7% tubular. The core is constituted by capsid protein hexamer subunits. The core is disassembled soon after virion entry. Host restriction factors such as TRIM5-alpha or TRIMCyp bind retroviral capsids and cause premature capsid disassembly, leading to blocks in reverse transcription. Capsid restriction by TRIM5 is one of the factors which restricts HIV-1 to the human species. Host PIN1 apparently facilitates the virion uncoating. On the other hand, interactions with PDZD8 or CYPA stabilize the capsid. Functionally, encapsulates and protects viral dimeric unspliced genomic RNA (gRNA). Binds these RNAs through its zinc fingers. Acts as a nucleic acid chaperone which is involved in rearangement of nucleic acid secondary structure during gRNA retrotranscription. Also facilitates template switch leading to recombination. As part of the polyprotein, participates in gRNA dimerization, packaging, tRNA incorporation and virion assembly. Aspartyl protease that mediates proteolytic cleavages of Gag and Gag-Pol polyproteins during or shortly after the release of the virion from the plasma membrane. Cleavages take place as an ordered, step-wise cascade to yield mature proteins. This process is called maturation. Displays maximal activity during the budding process just prior to particle release from the cell. Also cleaves Nef and Vif, probably concomitantly with viral structural proteins on maturation of virus particles. Hydrolyzes host EIF4GI and PABP1 in order to shut off the capped cellular mRNA translation. The resulting inhibition of cellular protein synthesis serves to ensure maximal viral gene expression and to evade host immune response. In terms of biological role, multifunctional enzyme that converts the viral RNA genome into dsDNA in the cytoplasm, shortly after virus entry into the cell. This enzyme displays a DNA polymerase activity that can copy either DNA or RNA templates, and a ribonuclease H (RNase H) activity that cleaves the RNA strand of RNA-DNA heteroduplexes in a partially processive 3' to 5' endonucleasic mode. Conversion of viral genomic RNA into dsDNA requires many steps. A tRNA(3)-Lys binds to the primer-binding site (PBS) situated at the 5'-end of the viral RNA. RT uses the 3' end of the tRNA primer to perform a short round of RNA-dependent minus-strand DNA synthesis. The reading proceeds through the U5 region and ends after the repeated (R) region which is present at both ends of viral RNA. The portion of the RNA-DNA heteroduplex is digested by the RNase H, resulting in a ssDNA product attached to the tRNA primer. This ssDNA/tRNA hybridizes with the identical R region situated at the 3' end of viral RNA. This template exchange, known as minus-strand DNA strong stop transfer, can be either intra- or intermolecular. RT uses the 3' end of this newly synthesized short ssDNA to perform the RNA-dependent minus-strand DNA synthesis of the whole template. RNase H digests the RNA template except for two polypurine tracts (PPTs) situated at the 5'-end and near the center of the genome. It is not clear if both polymerase and RNase H activities are simultaneous. RNase H probably can proceed both in a polymerase-dependent (RNA cut into small fragments by the same RT performing DNA synthesis) and a polymerase-independent mode (cleavage of remaining RNA fragments by free RTs). Secondly, RT performs DNA-directed plus-strand DNA synthesis using the PPTs that have not been removed by RNase H as primers. PPTs and tRNA primers are then removed by RNase H. The 3' and 5' ssDNA PBS regions hybridize to form a circular dsDNA intermediate. Strand displacement synthesis by RT to the PBS and PPT ends produces a blunt ended, linear dsDNA copy of the viral genome that includes long terminal repeats (LTRs) at both ends. Its function is as follows. Catalyzes viral DNA integration into the host chromosome, by performing a series of DNA cutting and joining reactions. This enzyme activity takes place after virion entry into a cell and reverse transcription of the RNA genome in dsDNA. The first step in the integration process is 3' processing. This step requires a complex comprising the viral genome, matrix protein, Vpr and integrase. This complex is called the pre-integration complex (PIC). The integrase protein removes 2 nucleotides from each 3' end of the viral DNA, leaving recessed CA OH's at the 3' ends. In the second step, the PIC enters cell nucleus. This process is mediated through integrase and Vpr proteins, and allows the virus to infect a non dividing cell. This ability to enter the nucleus is specific of lentiviruses, other retroviruses cannot and rely on cell division to access cell chromosomes. In the third step, termed strand transfer, the integrase protein joins the previously processed 3' ends to the 5' ends of strands of target cellular DNA at the site of integration. The 5'-ends are produced by integrase-catalyzed staggered cuts, 5 bp apart. A Y-shaped, gapped, recombination intermediate results, with the 5'-ends of the viral DNA strands and the 3' ends of target DNA strands remaining unjoined, flanking a gap of 5 bp. The last step is viral DNA integration into host chromosome. This involves host DNA repair synthesis in which the 5 bp gaps between the unjoined strands are filled in and then ligated. Since this process occurs at both cuts flanking the HIV genome, a 5 bp duplication of host DNA is produced at the ends of HIV-1 integration. Alternatively, Integrase may catalyze the excision of viral DNA just after strand transfer, this is termed disintegration. The protein is Gag-Pol polyprotein (gag-pol) of Human immunodeficiency virus type 2 subtype B (isolate D205) (HIV-2).